The sequence spans 471 residues: Trigger factor (471 aa).

In terms of domain architecture, PPIase FKBP-type spans 165 to 244 (GDFVSIDLRA…VQSVKERVLP (80 aa)). The disordered stretch occupies residues 407 to 471 (VTDASGNPVD…EATAEDPAKS (65 aa)). Residues 416-443 (DLEELVGGTEEDDVTEDATEDVTEDAAP) show a composition bias toward acidic residues.

The protein belongs to the FKBP-type PPIase family. Tig subfamily.

It localises to the cytoplasm. The enzyme catalyses [protein]-peptidylproline (omega=180) = [protein]-peptidylproline (omega=0). Functionally, involved in protein export. Acts as a chaperone by maintaining the newly synthesized protein in an open conformation. Functions as a peptidyl-prolyl cis-trans isomerase. The sequence is that of Trigger factor from Kineococcus radiotolerans (strain ATCC BAA-149 / DSM 14245 / SRS30216).